The following is a 476-amino-acid chain: Deoxyguanosinetriphosphate triphosphohydrolase-like protein 2 (476 aa).

The segment at 1–20 is disordered; sequence MYTDADRSREVVPEKDGHDK. The HD domain occupies 60-233; the sequence is RLTHSLEVAQ…MDLADDIAYS (174 aa).

The protein belongs to the dGTPase family. Type 2 subfamily.

The chain is Deoxyguanosinetriphosphate triphosphohydrolase-like protein 2 from Mesorhizobium japonicum (strain LMG 29417 / CECT 9101 / MAFF 303099) (Mesorhizobium loti (strain MAFF 303099)).